Here is a 560-residue protein sequence, read N- to C-terminus: Nuclear hormone receptor family member nhr-8 (560 aa).

The interval 1 to 21 is disordered; that stretch reads MPSSSPSMDESRRSAVPPKEP. The nuclear receptor DNA-binding region spans 23–98; it reads GRICTVCSDR…VGMNSEWLND (76 aa). NR C4-type zinc fingers lie at residues 26 to 46 and 62 to 86; these read CTVCSDRANGYNFGVLTCESC and CPFSDSCQITSASRKFCQACRLNKC. The NR LBD domain occupies 336-560; that stretch reads DEITLLEELH…PLIRELCSFE (225 aa).

It belongs to the nuclear hormone receptor family.

The protein localises to the nucleus. Functionally, orphan nuclear receptor. The protein is Nuclear hormone receptor family member nhr-8 (nhr-8) of Caenorhabditis elegans.